The sequence spans 357 residues: 3-dehydroquinate synthase (357 aa).

NAD(+) contacts are provided by residues 104 to 108, 128 to 129, Lys-141, and 168 to 171; these read GVVGD, TT, and FLET. Positions 183, 243, and 260 each coordinate Zn(2+).

The protein belongs to the sugar phosphate cyclases superfamily. Dehydroquinate synthase family. Co(2+) serves as cofactor. Zn(2+) is required as a cofactor. Requires NAD(+) as cofactor.

The protein localises to the cytoplasm. It catalyses the reaction 7-phospho-2-dehydro-3-deoxy-D-arabino-heptonate = 3-dehydroquinate + phosphate. Its pathway is metabolic intermediate biosynthesis; chorismate biosynthesis; chorismate from D-erythrose 4-phosphate and phosphoenolpyruvate: step 2/7. Its function is as follows. Catalyzes the conversion of 3-deoxy-D-arabino-heptulosonate 7-phosphate (DAHP) to dehydroquinate (DHQ). The chain is 3-dehydroquinate synthase from Streptococcus pyogenes serotype M49 (strain NZ131).